The sequence spans 257 residues: Ribosomal RNA small subunit methyltransferase A (257 aa).

The S-adenosyl-L-methionine site is built by His-12, Leu-14, Gly-39, Glu-60, Asp-83, and Asn-101.

It belongs to the class I-like SAM-binding methyltransferase superfamily. rRNA adenine N(6)-methyltransferase family. RsmA subfamily.

The protein localises to the cytoplasm. It catalyses the reaction adenosine(1518)/adenosine(1519) in 16S rRNA + 4 S-adenosyl-L-methionine = N(6)-dimethyladenosine(1518)/N(6)-dimethyladenosine(1519) in 16S rRNA + 4 S-adenosyl-L-homocysteine + 4 H(+). Specifically dimethylates two adjacent adenosines (A1518 and A1519) in the loop of a conserved hairpin near the 3'-end of 16S rRNA in the 30S particle. May play a critical role in biogenesis of 30S subunits. This chain is Ribosomal RNA small subunit methyltransferase A, found in Nitrosomonas europaea (strain ATCC 19718 / CIP 103999 / KCTC 2705 / NBRC 14298).